Consider the following 124-residue polypeptide: Small ribosomal subunit protein uS13 (124 aa).

The interval 95–124 is disordered; the sequence is GLPVRGQRTKTNARTRKGPKRTIAGKKKAR.

This sequence belongs to the universal ribosomal protein uS13 family. As to quaternary structure, part of the 30S ribosomal subunit. Forms a loose heterodimer with protein S19. Forms two bridges to the 50S subunit in the 70S ribosome.

In terms of biological role, located at the top of the head of the 30S subunit, it contacts several helices of the 16S rRNA. In the 70S ribosome it contacts the 23S rRNA (bridge B1a) and protein L5 of the 50S subunit (bridge B1b), connecting the 2 subunits; these bridges are implicated in subunit movement. Contacts the tRNAs in the A and P-sites. This is Small ribosomal subunit protein uS13 from Mycolicibacterium smegmatis (strain ATCC 700084 / mc(2)155) (Mycobacterium smegmatis).